Consider the following 270-residue polypeptide: Endochitinase PR4 (270 aa).

The signal sequence occupies residues 1-23 (MGNKLVLVLVAVALVMGPKNVSA). The Chitin-binding type-1 domain maps to 24-58 (QNCGCAEGLCCSQYGYCGTGEDYCGTGCQQGPCTT). 7 disulfide bridges follow: cysteine 26/cysteine 34, cysteine 28/cysteine 40, cysteine 33/cysteine 47, cysteine 51/cysteine 56, cysteine 88/cysteine 137, cysteine 150/cysteine 160, and cysteine 238/cysteine 270. Residue glutamate 132 is the Proton donor of the active site.

This sequence belongs to the glycosyl hydrolase 19 family. Chitinase class I subfamily.

The enzyme catalyses Random endo-hydrolysis of N-acetyl-beta-D-glucosaminide (1-&gt;4)-beta-linkages in chitin and chitodextrins.. Defense against chitin-containing fungal pathogens. The protein is Endochitinase PR4 (CHI4) of Phaseolus vulgaris (Kidney bean).